The sequence spans 137 residues: Gonadotropin subunit beta-1 (137 aa).

Positions 1 to 24 (MYCTHLRMLQLVVMATLWVTPVRA) are cleaved as a signal peptide. 5 disulfides stabilise this stretch: cysteine 32-cysteine 78, cysteine 46-cysteine 93, cysteine 55-cysteine 108, cysteine 59-cysteine 110, and cysteine 113-cysteine 120. An N-linked (GlcNAc...) asparagine glycan is attached at asparagine 36.

This sequence belongs to the glycoprotein hormones subunit beta family. As to quaternary structure, heterodimer of an alpha and a beta chain.

The protein resides in the secreted. Involved in gametogenesis and steroidogenesis. This chain is Gonadotropin subunit beta-1 (cgba), found in Coregonus autumnalis (Arctic cisco).